A 531-amino-acid polypeptide reads, in one-letter code: MAAVKTLNPKAEVARAQAALAVNISAARGLQDVLRTNLGPKGTMKMLVSGAGDIKLTKDGNVLLHEMQIQHPTASLIAKVATAQDDITGDGTTSNVLIIGELLKQADLYISEGLHPRIITEGFEAAKEKALQVLEQIKVSREMDRETLIDVARTSLRTKVHAELADVLTEAVVDSILAIKKQDEPIDLFMVEIMEMKHKSETDTSLIRGLVLDHGARHPDMKKRVEDAYILTCNVSLEYEKTEVNSGFFYKSAEEREKLVKAERKFIEDRVKKIVELKKKVCGDSDKGFVVINQKGIDPFSLDALAKEGIVALRRAKRRNMERLTLACGGVPLNSLDDLNPDCLGHAGLVYEYTLGEEKFTFIEKCNNPRSVTLLVKGPNKHTLTQIKDAIRDGLRAVKNAIDDGCVVPGAGAVEVAMAEALIKYKSSVKGRAQLGVQAFADALLIIPKVLAQNSGFDLQETLVKIRTEHSESGQLVGVDLNTGEPMVAAEVGIWDNYCVKKQLLHSCTVIATNILLVDEIMRAGMSSLKG.

Ala2 is subject to N-acetylalanine. Lys5 carries the N6-acetyllysine modification. Residue Gly39 participates in ADP binding. ATP is bound at residue Gly39. Position 90 (Asp90) interacts with Mg(2+). Residues Gly91, Thr92, Thr93, Ser94, Thr158, and Lys159 each coordinate ADP. ATP contacts are provided by Gly91, Thr92, and Thr93. Position 199 is an N6-acetyllysine (Lys199). At Ser205 the chain carries Phosphoserine. A Glycyl lysine isopeptide (Lys-Gly) (interchain with G-Cter in SUMO2) cross-link involves residue Lys251. Residues Lys287, Lys365, Lys377, and Lys388 each carry the N6-acetyllysine modification. An ADP-binding site is contributed by Ala411. Positions 411, 412, 496, and 501 each coordinate ATP. An ADP-binding site is contributed by Asp496.

This sequence belongs to the TCP-1 chaperonin family. In terms of assembly, component of the chaperonin-containing T-complex (TRiC), a hexadecamer composed of two identical back-to-back stacked rings enclosing a protein folding chamber. Each ring is made up of eight different subunits: TCP1/CCT1, CCT2, CCT3, CCT4, CCT5, CCT6A/CCT6, CCT7, CCT8. Interacts with PACRG.

It localises to the cytoplasm. The enzyme catalyses ATP + H2O = ADP + phosphate + H(+). Its function is as follows. Component of the chaperonin-containing T-complex (TRiC), a molecular chaperone complex that assists the folding of actin, tubulin and other proteins upon ATP hydrolysis. The TRiC complex mediates the folding of WRAP53/TCAB1, thereby regulating telomere maintenance. This Oryctolagus cuniculus (Rabbit) protein is T-complex protein 1 subunit zeta (CCT6).